The chain runs to 435 residues: Serine carboxypeptidase-like 14 (435 aa).

An N-terminal signal peptide occupies residues 1 to 23; that stretch reads MGSWIPKLLLLQLVLLLTKHADS. 3 disulfides stabilise this stretch: cysteine 82-cysteine 325, cysteine 246-cysteine 260, and cysteine 284-cysteine 291. N-linked (GlcNAc...) asparagine glycosylation is present at asparagine 103. Serine 178 is a catalytic residue. Asparagine 344 carries N-linked (GlcNAc...) asparagine glycosylation. Residue aspartate 360 is part of the active site. Residue asparagine 376 is glycosylated (N-linked (GlcNAc...) asparagine). Histidine 413 is an active-site residue.

The protein belongs to the peptidase S10 family. In terms of tissue distribution, expressed in senescent leaves.

Its subcellular location is the secreted. In terms of biological role, probable carboxypeptidase. This Arabidopsis thaliana (Mouse-ear cress) protein is Serine carboxypeptidase-like 14 (SCPL14).